The sequence spans 78 residues: Large ribosomal subunit protein bL28 (78 aa).

The disordered stretch occupies residues 1-23 (MSRVCQVTGKKPMVGNNRSHAKN).

Belongs to the bacterial ribosomal protein bL28 family.

The polypeptide is Large ribosomal subunit protein bL28 (Shewanella frigidimarina (strain NCIMB 400)).